Reading from the N-terminus, the 371-residue chain is Protein lifeguard 1 (371 aa).

The segment at M1–Q145 is disordered. The span at Y14–P49 shows a compositional bias: pro residues. A compositionally biased stretch (low complexity) spans Y84–G98. The segment covering G102–Y114 has biased composition (pro residues). Transmembrane regions (helical) follow at residues V165–F185, V197–C217, L228–F248, A253–M273, M283–I303, I307–D327, and F346–I366.

Belongs to the BI1 family. LFG subfamily.

It localises to the membrane. Its function is as follows. Potential apoptotic regulator. The sequence is that of Protein lifeguard 1 (GRINA) from Homo sapiens (Human).